Reading from the N-terminus, the 551-residue chain is uncharacterized protein (551 aa).

The segment covering 1–11 (MRRVSLPNQLN) has biased composition (polar residues). 2 disordered regions span residues 1-22 (MRRVSLPNQLNETRRRSPTRGE) and 523-551 (CDPTVDASGYEPHDQQPQQQQQQQQQAFH). Residues 12–22 (ETRRRSPTRGE) are compositionally biased toward basic and acidic residues. The span at 537–551 (QQPQQQQQQQQQAFH) shows a compositional bias: low complexity.

To Synechocystis PCC 6803 sll0335 and to M.tuberculosis Rv2567.

This is an uncharacterized protein from Mycobacterium bovis (strain ATCC BAA-935 / AF2122/97).